Reading from the N-terminus, the 294-residue chain is Phosphatidylserine decarboxylase proenzyme (294 aa).

Catalysis depends on charge relay system; for autoendoproteolytic cleavage activity residues aspartate 100, histidine 157, and serine 261. Catalysis depends on serine 261, which acts as the Schiff-base intermediate with substrate; via pyruvic acid; for decarboxylase activity. Serine 261 carries the post-translational modification Pyruvic acid (Ser); by autocatalysis.

It belongs to the phosphatidylserine decarboxylase family. PSD-B subfamily. Prokaryotic type I sub-subfamily. In terms of assembly, heterodimer of a large membrane-associated beta subunit and a small pyruvoyl-containing alpha subunit. Pyruvate serves as cofactor. Is synthesized initially as an inactive proenzyme. Formation of the active enzyme involves a self-maturation process in which the active site pyruvoyl group is generated from an internal serine residue via an autocatalytic post-translational modification. Two non-identical subunits are generated from the proenzyme in this reaction, and the pyruvate is formed at the N-terminus of the alpha chain, which is derived from the carboxyl end of the proenzyme. The autoendoproteolytic cleavage occurs by a canonical serine protease mechanism, in which the side chain hydroxyl group of the serine supplies its oxygen atom to form the C-terminus of the beta chain, while the remainder of the serine residue undergoes an oxidative deamination to produce ammonia and the pyruvoyl prosthetic group on the alpha chain. During this reaction, the Ser that is part of the protease active site of the proenzyme becomes the pyruvoyl prosthetic group, which constitutes an essential element of the active site of the mature decarboxylase.

It is found in the cell membrane. The catalysed reaction is a 1,2-diacyl-sn-glycero-3-phospho-L-serine + H(+) = a 1,2-diacyl-sn-glycero-3-phosphoethanolamine + CO2. It functions in the pathway phospholipid metabolism; phosphatidylethanolamine biosynthesis; phosphatidylethanolamine from CDP-diacylglycerol: step 2/2. Its function is as follows. Catalyzes the formation of phosphatidylethanolamine (PtdEtn) from phosphatidylserine (PtdSer). This Mannheimia succiniciproducens (strain KCTC 0769BP / MBEL55E) protein is Phosphatidylserine decarboxylase proenzyme.